The following is a 464-amino-acid chain: Phospho-cellobiase (464 aa).

Catalysis depends on Glu172, which acts as the Proton donor. Glu361 serves as the catalytic Nucleophile.

It belongs to the glycosyl hydrolase 1 family.

This chain is Phospho-cellobiase (casB), found in Klebsiella oxytoca.